Reading from the N-terminus, the 437-residue chain is Histidinol dehydrogenase (437 aa).

NAD(+)-binding residues include Y137, Q199, and N222. Substrate contacts are provided by S245, Q267, and H270. 2 residues coordinate Zn(2+): Q267 and H270. Catalysis depends on proton acceptor residues E335 and H336. Residues H336, D369, E423, and H428 each contribute to the substrate site. A Zn(2+)-binding site is contributed by D369. Position 428 (H428) interacts with Zn(2+).

Belongs to the histidinol dehydrogenase family. Zn(2+) is required as a cofactor.

The catalysed reaction is L-histidinol + 2 NAD(+) + H2O = L-histidine + 2 NADH + 3 H(+). It participates in amino-acid biosynthesis; L-histidine biosynthesis; L-histidine from 5-phospho-alpha-D-ribose 1-diphosphate: step 9/9. Catalyzes the sequential NAD-dependent oxidations of L-histidinol to L-histidinaldehyde and then to L-histidine. The protein is Histidinol dehydrogenase of Parasynechococcus marenigrum (strain WH8102).